Consider the following 476-residue polypeptide: Cyclase-associated protein 1 (476 aa).

2 disordered regions span residues 224-262 and 277-319; these read KPAS…KQGM and GLRK…PPKM. Over residues 231-243 the composition is skewed to pro residues; the sequence is KGPPGAPAPPPAP. The span at 246–256 shows a compositional bias: low complexity; it reads SAESSKPSSSS. A compositionally biased stretch (basic and acidic residues) spans 280–293; the sequence is KVTDDMKTKNRADR. The C-CAP/cofactor C-like domain maps to 316-453; it reads PPKMELQMGR…PDGDWVEHAL (138 aa).

Belongs to the CAP family. Expressed in roots, cotyledons, leaves, stems, flowers, pollen and shoots. Not detected in siliques.

In terms of biological role, actin monomer binding protein that accelerates the exchange of ADP for ATP. Regulates the pool of unpolymerized ATP-actin. Key intermediate between actin-depolymerizing factor (ADF)-mediated disassembly and the profilin-based nucleation and elongation machinery. The chain is Cyclase-associated protein 1 (CAP1) from Arabidopsis thaliana (Mouse-ear cress).